The chain runs to 217 residues: Monomethylamine corrinoid protein 2 (217 aa).

A B12-binding N-terminal domain is found at 1–91 (MTNTEIFEKL…ELEKSKVEGE (91 aa)). In terms of domain architecture, B12-binding spans 93–217 (TGLAITFVAE…AAKVALNIMK (125 aa)). Residue His106 participates in methylcob(III)alamin binding.

The protein belongs to the methylamine corrinoid protein family. Can form a complex with MtmB.

It functions in the pathway one-carbon metabolism; methanogenesis from methylamine. Functionally, acts as a methyl group carrier between MtmB and MtbA. The protein is Monomethylamine corrinoid protein 2 (mtmC2) of Methanosarcina acetivorans (strain ATCC 35395 / DSM 2834 / JCM 12185 / C2A).